The chain runs to 359 residues: MVLRNPEKKGIASTLDERSGEIFRRIVETYLESGEPLGSRNLSRLLPMSLSPASVRNVMSDLEDLGLIYSPHVSAGRLPTQTGLRFFVDAFMQVGNLSAEERTSIERQVRRADRDQPIDSLLAEASQMLSGMSRGAGLVITTKSDPVLKHVEFIRLAPTKALAVLVGDHDQVENRIIELPAGITSAQLTEAANFVNAHLAGQTIPELRSQLEKVKETVRGELDALSQDLVERGLAIWSGSEGDEKPARLIVRGRANLLEGLEGTEDIERLRMLFDDLEKKDSLIELLDLAESGPGVRIFIGSENKLFSLSGSSLIVAPYRDSDDRIVGAVGVIGPTRLNYSRIVPMVDYTAQLMSRLSR.

The protein belongs to the HrcA family.

Its function is as follows. Negative regulator of class I heat shock genes (grpE-dnaK-dnaJ and groELS operons). Prevents heat-shock induction of these operons. The chain is Heat-inducible transcription repressor HrcA from Sinorhizobium fredii (strain NBRC 101917 / NGR234).